The following is a 313-amino-acid chain: MKLKIAVQMDHISTVSIAGDTSFALSLEAQRRGHQLFHYTPDRLSLRDGKVFARIEEMQVRDEKGSHYSLGEKVRTDLSEMDVVLLRQDPPFDMNYITTTHILERIHPKTLVVNDPAWVRNSPEKIFVTEFADLMPDTLITKDPLEVAAFRKEFGDIIVKPLYGNGGAGIFHLHEADRNLASLLEMFGQLFREPYIVQRYLKDVRKGDKRIILIDGEPVGAINRVPAEHDSRSNMHVGGRAEKTELTEREREICARIGPSLRERGFILVGIDVIGDYMTEINVTSPTGVREVQRFGGADIASLFWDAVEGKRK.

The region spanning 125–309 (KIFVTEFADL…IASLFWDAVE (185 aa)) is the ATP-grasp domain. Residue 151–207 (RKEFGDIIVKPLYGNGGAGIFHLHEADRNLASLLEMFGQLFREPYIVQRYLKDVRKG) coordinates ATP. Residues glutamate 280 and asparagine 282 each contribute to the Mg(2+) site.

This sequence belongs to the prokaryotic GSH synthase family. Mg(2+) is required as a cofactor. Requires Mn(2+) as cofactor.

The catalysed reaction is gamma-L-glutamyl-L-cysteine + glycine + ATP = glutathione + ADP + phosphate + H(+). It functions in the pathway sulfur metabolism; glutathione biosynthesis; glutathione from L-cysteine and L-glutamate: step 2/2. This chain is Glutathione synthetase, found in Mesorhizobium japonicum (strain LMG 29417 / CECT 9101 / MAFF 303099) (Mesorhizobium loti (strain MAFF 303099)).